The primary structure comprises 581 residues: Pectinesterase 3 (581 aa).

The signal sequence occupies residues 1–55; sequence MDTIKSFKGYGKVNELEQQAYEKKTRKRLIIIAVSSIVLIAVIIAAVAGVVIHNR. Residues Asn101, Asn156, Asn200, Asn217, and Asn268 are each glycosylated (N-linked (GlcNAc...) asparagine). Substrate-binding residues include Thr348 and Gln378. The active-site Proton donor is the Asp401. Residues Cys415 and Cys435 are joined by a disulfide bond. Residue Asp422 is the Nucleophile of the active site. Asn477 carries N-linked (GlcNAc...) asparagine glycosylation. 2 residues coordinate substrate: Arg486 and Trp488.

This sequence in the N-terminal section; belongs to the PMEI family. The protein in the C-terminal section; belongs to the pectinesterase family.

The protein localises to the secreted. It is found in the cell wall. It catalyses the reaction [(1-&gt;4)-alpha-D-galacturonosyl methyl ester](n) + n H2O = [(1-&gt;4)-alpha-D-galacturonosyl](n) + n methanol + n H(+). The protein operates within glycan metabolism; pectin degradation; 2-dehydro-3-deoxy-D-gluconate from pectin: step 1/5. May have roles in the deposition of pectin in developing tissues and in the wall loosening and cell separation that occurs in cell expansion, fruit ripening and abscission. This chain is Pectinesterase 3 (MPE3), found in Phaseolus vulgaris (Kidney bean).